A 904-amino-acid chain; its full sequence is Nitrate reductase [NADH] 2 (904 aa).

2 stretches are compositionally biased toward polar residues: residues 1 to 10 (MAASVENRQF) and 35 to 50 (PSPN…NSTI). The interval 1–65 (MAASVENRQF…SSEDDDDDDE (65 aa)) is disordered. Residues 56–65 (SSEDDDDDDE) are compositionally biased toward acidic residues. Cys183 is a Mo-molybdopterin binding site. One can recognise a Cytochrome b5 heme-binding domain in the interval 531-606 (SKMYSMSEVR…LEDFRIGELI (76 aa)). 2 residues coordinate heme: His566 and His589. Positions 647–759 (REKIPCKLID…KGPLGHIEYQ (113 aa)) constitute an FAD-binding FR-type domain. FAD contacts are provided by residues 699-702 (RAYT), 716-720 (VVKIY), Phe721, Phe728, 733-735 (QMS), and Thr786.

Belongs to the nitrate reductase family. As to quaternary structure, homodimer. Requires FAD as cofactor. Heme serves as cofactor. Mo-molybdopterin is required as a cofactor.

It carries out the reaction nitrite + NAD(+) + H2O = nitrate + NADH + H(+). Its activity is regulated as follows. Regulated by the nitrogen source and controlled by the circadian rhythm. Nitrate reductase is a key enzyme involved in the first step of nitrate assimilation in plants, fungi and bacteria. The chain is Nitrate reductase [NADH] 2 (NIA2) from Nicotiana tabacum (Common tobacco).